The primary structure comprises 485 residues: 6-phosphogluconate dehydrogenase, decarboxylating (485 aa).

NADP(+) contacts are provided by residues 12 to 17 (GLAVMG), 35 to 37 (NRT), 77 to 79 (VKA), and N105. Residues N105 and 131–133 (SGG) each bind substrate. K186 (proton acceptor) is an active-site residue. Position 189–190 (189–190 (HN)) interacts with substrate. E193 (proton donor) is an active-site residue. The substrate site is built by Y194, K263, R290, R449, and H455.

Belongs to the 6-phosphogluconate dehydrogenase family. As to quaternary structure, homodimer.

The catalysed reaction is 6-phospho-D-gluconate + NADP(+) = D-ribulose 5-phosphate + CO2 + NADPH. It participates in carbohydrate degradation; pentose phosphate pathway; D-ribulose 5-phosphate from D-glucose 6-phosphate (oxidative stage): step 3/3. In terms of biological role, catalyzes the oxidative decarboxylation of 6-phosphogluconate to ribulose 5-phosphate and CO(2), with concomitant reduction of NADP to NADPH. This Cunninghamella elegans protein is 6-phosphogluconate dehydrogenase, decarboxylating (6-PGD).